A 330-amino-acid chain; its full sequence is Cobalamin biosynthesis protein CobD (330 aa).

Transmembrane regions (helical) follow at residues 60–80 (TLVILTLAVFFTLLAIFPPIV), 153–173 (GIIAPLFWAVALSIFAPLLGV), 227–247 (LGIVAISFMAGYNGPQAWKIF), and 308–328 (IVLFTTFLLSLLFLLFRFVLT).

The protein belongs to the CobD/CbiB family.

The protein resides in the cell membrane. It participates in cofactor biosynthesis; adenosylcobalamin biosynthesis. Its function is as follows. Converts cobyric acid to cobinamide by the addition of aminopropanol on the F carboxylic group. The polypeptide is Cobalamin biosynthesis protein CobD (Desulfotalea psychrophila (strain LSv54 / DSM 12343)).